We begin with the raw amino-acid sequence, 427 residues long: UPF0761 membrane protein Cphamn1_1013 (427 aa).

6 helical membrane passes run 51–71, 107–127, 147–167, 188–208, 218–238, and 251–271; these read LLSL…SPVF, TVPT…ISTI, FTLY…GLVA, ILSY…YMLV, AVSG…WFSF, and GALS…VVAL.

It belongs to the UPF0761 family.

The protein resides in the cell inner membrane. This chain is UPF0761 membrane protein Cphamn1_1013, found in Chlorobium phaeobacteroides (strain BS1).